The sequence spans 399 residues: F-box protein At1g10110 (399 aa).

The region spanning 9–56 is the F-box domain; the sequence is PNWSELVTDILSLVFKHLSFTDFARAKTVCSSWYFASKSSSPRKNHTP.

The sequence is that of F-box protein At1g10110 from Arabidopsis thaliana (Mouse-ear cress).